Here is a 1244-residue protein sequence, read N- to C-terminus: Membrane-associated phosphatidylinositol transfer protein 1 (1244 aa).

T59 is subject to Phosphothreonine. Disordered regions lie at residues 258-331 and 339-358; these read KCNT…QSLS and ARDSENSSEEEFFDAHEGFS. Position 287 is a phosphothreonine; by CDK1 (T287). Residues 299 to 319 show a composition bias toward low complexity; sequence ASPDASFGKQWSSSSRSSYSS. A phosphoserine mark is found at S300, S304, S319, S326, S329, S342, S345, S346, and S373. At S382 the chain carries Phosphoserine; by CDK1. The segment at 581–682 is disordered; it reads AGTGSRGSSR…SSEAPDGPSS (102 aa). Residues S593, S600, and S621 each carry the phosphoserine modification. A compositionally biased stretch (polar residues) spans 643 to 658; the sequence is GSQNSLQAAPATTSSW. The 195-residue stretch at 686–880 folds into the DDHD domain; the sequence is LDFKVSGFFL…VAFILRQVIE (195 aa). Position 896 is a phosphoserine (S896). Positions 1206–1244 are disordered; it reads QLLRSRGPSQAEREGPGTPPTTLARGKARSISLKLDSEE. R1211 and R1218 each carry omega-N-methylarginine. S1237 is modified (phosphoserine).

This sequence belongs to the PtdIns transfer protein family. PI transfer class IIA subfamily. In terms of assembly, interacts with PIK4CA. Interacts with PTK2B via its C-terminus. Interacts with RHOA. Has higher affinity for the inactive, GDP-bound form of RHOA. The CDK1-phosphorylated form interacts with PLK1. Interacts with VAPB. In terms of processing, phosphorylated on multiple sites by CDK1 at the onset of mitosis. Phosphorylation facilitates dissociation from the Golgi complex and is required for interaction with PLK1. Phosphorylated on threonine residues upon treatment with oleic acid. Post-translationally, phosphorylated on tyrosine residues by PTK2B. In terms of tissue distribution, ubiquitous.

It is found in the cytoplasm. It localises to the golgi apparatus. The protein localises to the golgi stack membrane. The protein resides in the endoplasmic reticulum membrane. Its subcellular location is the lipid droplet. It is found in the cleavage furrow. It localises to the midbody. It catalyses the reaction a 1,2-diacyl-sn-glycero-3-phospho-(1D-myo-inositol)(in) = a 1,2-diacyl-sn-glycero-3-phospho-(1D-myo-inositol)(out). Catalyzes the transfer of phosphatidylinositol (PI) between membranes. Binds PI, phosphatidylcholine (PC) and phosphatidic acid (PA) with the binding affinity order of PI &gt; PA &gt; PC. Regulates RHOA activity, and plays a role in cytoskeleton remodeling. Necessary for normal completion of cytokinesis. Plays a role in maintaining normal diacylglycerol levels in the Golgi apparatus. Necessary for maintaining the normal structure of the endoplasmic reticulum and the Golgi apparatus. Required for protein export from the endoplasmic reticulum and the Golgi. Binds calcium ions. This chain is Membrane-associated phosphatidylinositol transfer protein 1 (PITPNM1), found in Homo sapiens (Human).